The following is a 203-amino-acid chain: Vexin (203 aa).

The segment covering 59–70 has biased composition (basic and acidic residues); that stretch reads HRTDRRDGEGRW. Residues 59 to 101 form a disordered region; the sequence is HRTDRRDGEGRWSGRFQNPRLQGPHPAKTPARPVGTSEPKSAN.

The protein belongs to the vexin family.

It localises to the cell membrane. The protein resides in the nucleus. Its function is as follows. Required for neurogenesis in the neural plate and retina. Strongly cooperates with neural bHLH factors to promote neurogenesis. In Bos taurus (Bovine), this protein is Vexin.